The sequence spans 1094 residues: RecBCD enzyme subunit RecB (1094 aa).

The UvrD-like helicase ATP-binding domain occupies M1–D326. The DNA-binding and helicase activity, interacts with RecC stretch occupies residues M1–S713. A21–T28 is an ATP binding site. A UvrD-like helicase C-terminal domain is found at A357–G613. The interval T775–S1094 is nuclease activity, interacts with RecD and RecA. Mg(2+) is bound by residues H838, D975, and D989. D989 functions as the For nuclease activity in the catalytic mechanism.

The protein belongs to the helicase family. UvrD subfamily. In terms of assembly, heterotrimer of RecB, RecC and RecD. All subunits contribute to DNA-binding. Interacts with RecA. Requires Mg(2+) as cofactor.

It carries out the reaction Exonucleolytic cleavage (in the presence of ATP) in either 5'- to 3'- or 3'- to 5'-direction to yield 5'-phosphooligonucleotides.. The catalysed reaction is Couples ATP hydrolysis with the unwinding of duplex DNA by translocating in the 3'-5' direction.. It catalyses the reaction ATP + H2O = ADP + phosphate + H(+). Functionally, a helicase/nuclease that prepares dsDNA breaks (DSB) for recombinational DNA repair. Binds to DSBs and unwinds DNA via a highly rapid and processive ATP-dependent bidirectional helicase activity. In the holoenzyme this subunit contributes ATPase, 3'-5' helicase, exonuclease activity and loads RecA onto ssDNA. Unlike the case in E.coli, suppresses RecA-dependent homologous recombination, is instead required for single-strand annealing pathway repair of DSB. This Mycobacterium tuberculosis (strain CDC 1551 / Oshkosh) protein is RecBCD enzyme subunit RecB.